We begin with the raw amino-acid sequence, 304 residues long: MQKFDTKTFQGLILTLQDYWARQGCTIVQPLDMEVGAGTSHPMTCLRALGPEPIAAAYVQPSRRPTDGRYGENPNRLQHYYQFQVIIKPSPDNIQELYLGSLKELGLDPLIHDIRFVEDNWENPTLGAWGLGWEVWLNGMEVTQFTYFQQVGGLECKPVTGEITYGLERLAMYIQGVDSVYDLIWCDGPLGTTTYGDIYHQNEVEQSTYNFEYADVDFLFSCFEQYEKEAQSLLALEVPLPLPAYERILKAGHTFNLLDARKAISVTERQRYILRIRTLTKAVAEAYYASREALGFPMCKKNQN.

Belongs to the class-II aminoacyl-tRNA synthetase family. As to quaternary structure, tetramer of two alpha and two beta subunits.

The protein localises to the cytoplasm. It carries out the reaction tRNA(Gly) + glycine + ATP = glycyl-tRNA(Gly) + AMP + diphosphate. The chain is Glycine--tRNA ligase alpha subunit from Yersinia enterocolitica serotype O:8 / biotype 1B (strain NCTC 13174 / 8081).